The following is a 98-amino-acid chain: NADH-ubiquinone oxidoreductase chain 4L (98 aa).

3 helical membrane passes run 1–21 (MPFI…GLLM), 29–49 (SLLC…LLCL), and 61–81 (MILL…LVMV).

Belongs to the complex I subunit 4L family. Core subunit of respiratory chain NADH dehydrogenase (Complex I) which is composed of 45 different subunits.

Its subcellular location is the mitochondrion inner membrane. The catalysed reaction is a ubiquinone + NADH + 5 H(+)(in) = a ubiquinol + NAD(+) + 4 H(+)(out). Functionally, core subunit of the mitochondrial membrane respiratory chain NADH dehydrogenase (Complex I) which catalyzes electron transfer from NADH through the respiratory chain, using ubiquinone as an electron acceptor. Part of the enzyme membrane arm which is embedded in the lipid bilayer and involved in proton translocation. The protein is NADH-ubiquinone oxidoreductase chain 4L (MT-ND4L) of Dugong dugon (Dugong).